We begin with the raw amino-acid sequence, 157 residues long: Transcriptional repressor NrdR (157 aa).

A zinc finger spans residues 3–34; sequence CPFCGFADTRVIDSRLGKEGNNIRRRRECSQC. The ATP-cone domain maps to 49-139; it reads PLIIKKDARR…VYRQFKDINE (91 aa).

It belongs to the NrdR family. Requires Zn(2+) as cofactor.

Functionally, negatively regulates transcription of bacterial ribonucleotide reductase nrd genes and operons by binding to NrdR-boxes. In Syntrophotalea carbinolica (strain DSM 2380 / NBRC 103641 / GraBd1) (Pelobacter carbinolicus), this protein is Transcriptional repressor NrdR.